We begin with the raw amino-acid sequence, 263 residues long: uncharacterized protein (263 aa).

The GST N-terminal domain maps to Q44–I131. Residues D134 to K263 form the GST C-terminal domain.

Belongs to the GST superfamily. Homodimer.

This is an uncharacterized protein from Streptococcus mutans serotype c (strain ATCC 700610 / UA159).